The sequence spans 1015 residues: Translation initiation factor IF-2 (1015 aa).

Disordered regions lie at residues 124–144, 159–179, 196–230, and 250–386; these read EKEP…EKKV, EVTV…PKPV, KKEE…KEEE, and IDLA…VSEE. Composition is skewed to basic and acidic residues over residues 196-217 and 265-315; these read KKEE…EKPV and SKEE…DPNG. Positions 514 to 684 constitute a tr-type G domain; that stretch reads HRAPIVTVMG…LLEAEMLDLK (171 aa). Residues 523 to 530 are G1; sequence GHVDHGKT. Residue 523–530 participates in GTP binding; it reads GHVDHGKT. Residues 548–552 are G2; it reads GITQH. The interval 570–573 is G3; sequence DTPG. GTP-binding positions include 570–574 and 624–627; these read DTPGH and NKID. Positions 624–627 are G4; that stretch reads NKID. The tract at residues 660-662 is G5; the sequence is SAK.

The protein belongs to the TRAFAC class translation factor GTPase superfamily. Classic translation factor GTPase family. IF-2 subfamily.

Its subcellular location is the cytoplasm. Its function is as follows. One of the essential components for the initiation of protein synthesis. Protects formylmethionyl-tRNA from spontaneous hydrolysis and promotes its binding to the 30S ribosomal subunits. Also involved in the hydrolysis of GTP during the formation of the 70S ribosomal complex. In Bacteroides fragilis (strain ATCC 25285 / DSM 2151 / CCUG 4856 / JCM 11019 / LMG 10263 / NCTC 9343 / Onslow / VPI 2553 / EN-2), this protein is Translation initiation factor IF-2.